The chain runs to 508 residues: Pyruvate kinase (508 aa).

R56 lines the substrate pocket. 4 residues coordinate K(+): N58, S60, D90, and T91. ATP is bound at residue 58–61; it reads NFSH. Residues R97 and K185 each contribute to the ATP site. Residue E251 participates in Mg(2+) binding. The substrate site is built by G274, D275, and T307. D275 provides a ligand contact to Mg(2+).

It belongs to the pyruvate kinase family. As to quaternary structure, homotetramer. It depends on Mg(2+) as a cofactor. K(+) serves as cofactor.

It carries out the reaction pyruvate + ATP = phosphoenolpyruvate + ADP + H(+). It functions in the pathway carbohydrate degradation; glycolysis; pyruvate from D-glyceraldehyde 3-phosphate: step 5/5. Regulated by phosphoenolpyruvate substrate and is allosterically activated by ribose-5-phosphate, AMP and other nucleoside monophosphates but not by fructose-1,6-bisphosphate. The protein is Pyruvate kinase (pyk) of Mycoplasma pneumoniae (strain ATCC 29342 / M129 / Subtype 1) (Mycoplasmoides pneumoniae).